The sequence spans 234 residues: Covalently-linked cell wall protein 14 (234 aa).

Positions 1-22 are cleaved as a signal peptide; it reads MASFLKISTLIAIVSTLQTTLA. The region spanning 23–109 is the CFEM domain; that stretch reads APPACLLACV…SSEESSASAS (87 aa). 4 cysteine pairs are disulfide-bonded: Cys27-Cys66, Cys31-Cys61, Cys41-Cys49, and Cys51-Cys82. Residue Asp46 participates in heme binding. Over residues 86–207 the composition is skewed to low complexity; sequence SSQSSSSESE…ASSSESTTAT (122 aa). Positions 86 to 208 are disordered; sequence SSQSSSSESE…SSSESTTATG (123 aa). Gly215 carries GPI-anchor amidated glycine lipidation. Positions 216–234 are cleaved as a propeptide — removed in mature form; it reads SAAKVGLGALVGLVGAVLL.

The protein belongs to the CCW14 family. The GPI-anchor is attached to the protein in the endoplasmic reticulum and serves to target the protein to the cell surface. There, the glucosamine-inositol phospholipid moiety is cleaved off and the GPI-modified mannoprotein is covalently attached via its lipidless GPI glycan remnant to the 1,6-beta-glucan of the outer cell wall layer.

The protein resides in the secreted. The protein localises to the cell wall. Its subcellular location is the membrane. Beta-glucan associated cell wall protein involved in cell wall structure. May serve as cross-linking or coat-forming wall protein. The sequence is that of Covalently-linked cell wall protein 14 (SSR1) from Candida albicans (strain SC5314 / ATCC MYA-2876) (Yeast).